Reading from the N-terminus, the 741-residue chain is DNA ligase (741 aa).

NAD(+) is bound by residues 78-82, 127-128, and Glu161; these read DADYD and SL. The active-site N6-AMP-lysine intermediate is Lys163. Residues Arg184, Glu219, Lys335, and Lys359 each coordinate NAD(+). Positions 464, 467, 482, and 488 each coordinate Zn(2+). Positions 662 to 741 constitute a BRCT domain; the sequence is VGDSPVAGKT…DAWRVLAGLA (80 aa).

This sequence belongs to the NAD-dependent DNA ligase family. LigA subfamily. Mg(2+) is required as a cofactor. Requires Mn(2+) as cofactor.

The enzyme catalyses NAD(+) + (deoxyribonucleotide)n-3'-hydroxyl + 5'-phospho-(deoxyribonucleotide)m = (deoxyribonucleotide)n+m + AMP + beta-nicotinamide D-nucleotide.. Functionally, DNA ligase that catalyzes the formation of phosphodiester linkages between 5'-phosphoryl and 3'-hydroxyl groups in double-stranded DNA using NAD as a coenzyme and as the energy source for the reaction. It is essential for DNA replication and repair of damaged DNA. In Dinoroseobacter shibae (strain DSM 16493 / NCIMB 14021 / DFL 12), this protein is DNA ligase.